Reading from the N-terminus, the 344-residue chain is MIVREGSAEILVPEVYHGPGKRGTGFYNADQKINRDITIEFIKKMGIRNVLDGFGGTGIRGIRISKETDSAVTISEVSPDSYRLIRDNVERNGSQASVINDSFECVLQHGAYEYVDVDPYGSPVPYLDAALMGVKRNGFLGVTATDQSALTGSVPHKTRIRYDALIKNDTFRHEMGIRLLIGYMAKRAASLGRFIDPLISIWHGHYYRVFVRVRKGFEGAGRMMQNLGYVNKHNLLSGIYQDMDEGPVWKGNLQDNAVAEAVLASAGHKAFNPEENRLLFCDLTDIARARHTSLPDIESVIDALSSSGHAASRTMFSPTGIKTDASCDLVESLMMDTLHRRSPA.

In terms of domain architecture, Trm1 methyltransferase spans 1 to 334; it reads MIVREGSAEI…ASCDLVESLM (334 aa). S-adenosyl-L-methionine-binding residues include Arg35, Arg60, and Glu76.

This sequence belongs to the class I-like SAM-binding methyltransferase superfamily. Trm1 family.

The enzyme catalyses guanosine(26) in tRNA + 2 S-adenosyl-L-methionine = N(2)-dimethylguanosine(26) in tRNA + 2 S-adenosyl-L-homocysteine + 2 H(+). Dimethylates a single guanine residue at position 26 of a number of tRNAs using S-adenosyl-L-methionine as donor of the methyl groups. This chain is tRNA (guanine(26)-N(2))-dimethyltransferase, found in Thermoplasma acidophilum (strain ATCC 25905 / DSM 1728 / JCM 9062 / NBRC 15155 / AMRC-C165).